The sequence spans 711 residues: Polyribonucleotide nucleotidyltransferase (711 aa).

Mg(2+) contacts are provided by D486 and D492. Residues P553–I612 form the KH domain. In terms of domain architecture, S1 motif spans G622–K690. The disordered stretch occupies residues K690–E711. Positions P698–E711 are enriched in low complexity.

Belongs to the polyribonucleotide nucleotidyltransferase family. Component of the RNA degradosome, which is a multiprotein complex involved in RNA processing and mRNA degradation. Mg(2+) is required as a cofactor.

Its subcellular location is the cytoplasm. It catalyses the reaction RNA(n+1) + phosphate = RNA(n) + a ribonucleoside 5'-diphosphate. Its function is as follows. Involved in mRNA degradation. Catalyzes the phosphorolysis of single-stranded polyribonucleotides processively in the 3'- to 5'-direction. This is Polyribonucleotide nucleotidyltransferase from Escherichia coli O127:H6 (strain E2348/69 / EPEC).